The following is a 239-amino-acid chain: Ribonuclease PH (239 aa).

Phosphate contacts are provided by residues R86 and 124 to 126 (GTR).

Belongs to the RNase PH family. As to quaternary structure, homohexameric ring arranged as a trimer of dimers.

The enzyme catalyses tRNA(n+1) + phosphate = tRNA(n) + a ribonucleoside 5'-diphosphate. Phosphorolytic 3'-5' exoribonuclease that plays an important role in tRNA 3'-end maturation. Removes nucleotide residues following the 3'-CCA terminus of tRNAs; can also add nucleotides to the ends of RNA molecules by using nucleoside diphosphates as substrates, but this may not be physiologically important. Probably plays a role in initiation of 16S rRNA degradation (leading to ribosome degradation) during starvation. The sequence is that of Ribonuclease PH from Cupriavidus taiwanensis (strain DSM 17343 / BCRC 17206 / CCUG 44338 / CIP 107171 / LMG 19424 / R1) (Ralstonia taiwanensis (strain LMG 19424)).